Here is a 242-residue protein sequence, read N- to C-terminus: Anamorsin homolog (242 aa).

Residues 1–140 (MMNFADTLVI…NVTAENPDFL (140 aa)) are N-terminal SAM-like domain. A linker region spans residues 141–162 (SNEDDDEGNSSDGEAYQNAEDN). Positions 205, 208, 216, and 219 each coordinate [4Fe-4S] cluster. 2 short sequence motifs (cx2C motif) span residues 205-208 (CGNC) and 216-219 (CASC). Positions 205-219 (CGNCYLGDAFRCASC) are fe-S binding site B.

The protein belongs to the anamorsin family. Monomer. It depends on [4Fe-4S] cluster as a cofactor.

The protein resides in the cytoplasm. It is found in the mitochondrion intermembrane space. In terms of biological role, component of the cytosolic iron-sulfur (Fe-S) protein assembly (CIA) machinery. Required for the maturation of extramitochondrial Fe-S proteins. Part of an electron transfer chain functioning in an early step of cytosolic Fe-S biogenesis, facilitating the de novo assembly of a [4Fe-4S] cluster on the cytosolic Fe-S scaffold complex. Electrons are transferred from NADPH via a FAD- and FMN-containing diflavin oxidoreductase. Together with the diflavin oxidoreductase, also required for the assembly of the diferric tyrosyl radical cofactor of ribonucleotide reductase (RNR), probably by providing electrons for reduction during radical cofactor maturation in the catalytic small subunit. This chain is Anamorsin homolog, found in Plasmodium knowlesi (strain H).